Reading from the N-terminus, the 606-residue chain is Atypical protein kinase C (606 aa).

The 84-residue stretch at 30-113 folds into the PB1 domain; the sequence is SITVKTAYNG…SQLVIHVFPN (84 aa). A Phorbol-ester/DAG-type zinc finger spans residues 145 to 195; it reads GHIFQAKRFNRRAFCAYCQDRIWGLGRQGFKCIQCKLLVHKKCHKLVQKHC. A Protein kinase domain is found at 264–532; it reads FELIRVIGRG…FMDIVSHPFF (269 aa). Residues 270–278 and Lys293 each bind ATP; that span reads IGRGSYAKV. Asp388 serves as the catalytic Proton acceptor. One can recognise an AGC-kinase C-terminal domain in the interval 533-604; sequence KNMDWELLER…VNPLLMSLED (72 aa).

This sequence belongs to the protein kinase superfamily. AGC Ser/Thr protein kinase family. PKC subfamily. Interacts with baz; the interaction is required for apical localization of aPKC in neuroblasts and epithelial cells. Interacts with Dap160; the interaction promotes aPKC apical localization and kinase activity. Interacts with and phosphorylates l(2)gl and yrt. Interacts with crb and ref(2)P. Forms a complex with baz, fz and Patj. Expressed in the testis. In spermatid cysts, localizes near the tips of spermatid flagellar axonemes (at protein level). Detectable in freshly laid eggs before onset of zygotic transcription so is deposited in the egg during oogenesis. At the cellular blastoderm stage, present in all cells except the pole cells. During gastrulation, strongly expressed in tissues undergoing morphogenetic movements such as invaginating mesoderm, proctodeum and cephalic furrow. Strongly expressed in neuroblasts.

It localises to the cytoplasm. The protein localises to the cell cortex. The protein resides in the apicolateral cell membrane. It carries out the reaction L-seryl-[protein] + ATP = O-phospho-L-seryl-[protein] + ADP + H(+). It catalyses the reaction L-threonyl-[protein] + ATP = O-phospho-L-threonyl-[protein] + ADP + H(+). Its function is as follows. Serine/threonine protein kinase which is required for apico-basal cell polarity in the germ line as well as in epithelial and neural precursor cells, for epithelial planar cell polarity and for cell proliferation. During oocyte development, required for the posterior translocation of oocyte specification factors and for the posterior establishment of the microtubule organizing center within the presumptive oocyte. Phosphorylates l(2)gl which restricts l(2)gl activity to the oocyte posterior and regulates posterior enrichment of par-1, leading to establishment of correct oocyte polarity. Essential for apical localization of l(2)gl and par-6 in neuroblasts and for exclusion of mira from the apical cortex. Phosphorylates baz which is required for targeting of baz to the postsynaptic region where it is involved in actin organization, and for apical exclusion of baz which is necessary for establishment of the apical/lateral border in epithelial cells. Phosphorylates yrt which prevents its premature apical localization and is necessary for correct epithelial cell polarization. Required for the establishment of mitotic spindle orientation during symmetric division of epithelial cells and for apical exclusion of raps/Pins. Involved in symmetric adherens junction positioning during embryogenesis. Required for polarization of the spermatid cyst which is necessary for sperm differentiation. Required for stimulation of the Toll signaling pathway which activates Dif and dl and plays a role in innate immunity. Plays a role in memory enhancement. The chain is Atypical protein kinase C from Drosophila melanogaster (Fruit fly).